The chain runs to 447 residues: Phosphoglucosamine mutase (447 aa).

Ser-103 serves as the catalytic Phosphoserine intermediate. Ser-103, Asp-242, Asp-244, and Asp-246 together coordinate Mg(2+). Ser-103 carries the post-translational modification Phosphoserine.

Belongs to the phosphohexose mutase family. Requires Mg(2+) as cofactor. In terms of processing, activated by phosphorylation.

It catalyses the reaction alpha-D-glucosamine 1-phosphate = D-glucosamine 6-phosphate. In terms of biological role, catalyzes the conversion of glucosamine-6-phosphate to glucosamine-1-phosphate. The polypeptide is Phosphoglucosamine mutase (Cereibacter sphaeroides (strain ATCC 17029 / ATH 2.4.9) (Rhodobacter sphaeroides)).